The primary structure comprises 165 residues: Protein SprT (165 aa).

A SprT-like domain is found at 20 to 163 (EKLAQANLKL…RCVHCGEQLV (144 aa)). His78 contacts Zn(2+). Glu79 is an active-site residue. His82 is a Zn(2+) binding site.

It belongs to the SprT family. Requires Zn(2+) as cofactor.

It is found in the cytoplasm. The polypeptide is Protein SprT (Shigella sonnei (strain Ss046)).